We begin with the raw amino-acid sequence, 140 residues long: Virion protein 5 (140 aa).

Its subcellular location is the virion. This Enterococcus faecalis (Streptococcus faecalis) protein is Virion protein 5.